We begin with the raw amino-acid sequence, 438 residues long: Aspartate--tRNA(Asp/Asn) ligase (438 aa).

An L-aspartate-binding site is contributed by glutamate 176. The tract at residues 198–201 (QLYK) is aspartate. L-aspartate is bound at residue arginine 220. Residues 220–222 (RAE), 228–230 (RHL), and glutamate 361 each bind ATP. Residues glutamate 361 and serine 364 each contribute to the Mg(2+) site. Residues serine 364 and arginine 368 each coordinate L-aspartate. ATP is bound at residue 409-412 (GADR).

This sequence belongs to the class-II aminoacyl-tRNA synthetase family. Type 2 subfamily. Homodimer. Mg(2+) is required as a cofactor.

It is found in the cytoplasm. The catalysed reaction is tRNA(Asx) + L-aspartate + ATP = L-aspartyl-tRNA(Asx) + AMP + diphosphate. In terms of biological role, aspartyl-tRNA synthetase with relaxed tRNA specificity since it is able to aspartylate not only its cognate tRNA(Asp) but also tRNA(Asn). Reaction proceeds in two steps: L-aspartate is first activated by ATP to form Asp-AMP and then transferred to the acceptor end of tRNA(Asp/Asn). This Methanococcus maripaludis (strain DSM 14266 / JCM 13030 / NBRC 101832 / S2 / LL) protein is Aspartate--tRNA(Asp/Asn) ligase.